We begin with the raw amino-acid sequence, 115 residues long: Evasin P1182 (115 aa).

A signal peptide spans 1-26 (MALNWSFRVIFVSTMWCALLKFATLG). 4 cysteine pairs are disulfide-bonded: Cys38-Cys58, Cys54-Cys94, Cys70-Cys99, and Cys89-Cys108. N-linked (GlcNAc...) asparagine glycans are attached at residues Asn45, Asn72, and Asn103.

The protein resides in the secreted. Functionally, salivary chemokine-binding protein which binds to host chemokines CCL2, CCL3, CCL4, CCL8 and CCL18. The protein is Evasin P1182 of Amblyomma maculatum (Gulf Coast tick).